Reading from the N-terminus, the 155-residue chain is MPERTQAPVTLDIHQILSILPHRYPLVMVDRVTEITANKCIRGYKCVAYNEPWFQGHFPQRPIMPGVLILESLTQLGGILAYASDPFDATSNLMFFLGIDKAKFRHTVTPGDRLDLYAEVLHHRSNVWKLRGEASVDGTLCAEGEMLASIVDREP.

Residue histidine 57 is part of the active site.

This sequence belongs to the thioester dehydratase family. FabZ subfamily.

It localises to the cytoplasm. It catalyses the reaction a (3R)-hydroxyacyl-[ACP] = a (2E)-enoyl-[ACP] + H2O. Its function is as follows. Involved in unsaturated fatty acids biosynthesis. Catalyzes the dehydration of short chain beta-hydroxyacyl-ACPs and long chain saturated and unsaturated beta-hydroxyacyl-ACPs. The polypeptide is 3-hydroxyacyl-[acyl-carrier-protein] dehydratase FabZ (Sorangium cellulosum (strain So ce56) (Polyangium cellulosum (strain So ce56))).